Reading from the N-terminus, the 213-residue chain is Ripening-related protein 3 (213 aa).

Residues 1–32 (MAGAMTMSRRRLSHALLLVLAILPNLAALAVA) form the signal peptide.

The protein belongs to the kiwellin family.

It localises to the secreted. The sequence is that of Ripening-related protein 3 from Oryza sativa subsp. japonica (Rice).